A 274-amino-acid chain; its full sequence is Orotidine 5'-phosphate decarboxylase (274 aa).

Residues aspartate 40, 62-64 (KTH), 93-102 (DRKFVDIGNT), tyrosine 227, and arginine 245 each bind substrate. Lysine 95 serves as the catalytic Proton donor.

This sequence belongs to the OMP decarboxylase family.

It carries out the reaction orotidine 5'-phosphate + H(+) = UMP + CO2. It functions in the pathway pyrimidine metabolism; UMP biosynthesis via de novo pathway; UMP from orotate: step 2/2. This Coccidioides immitis (strain RS) (Valley fever fungus) protein is Orotidine 5'-phosphate decarboxylase (URA3).